The sequence spans 293 residues: Acetyl-coenzyme A carboxylase carboxyl transferase subunit beta (293 aa).

In terms of domain architecture, CoA carboxyltransferase N-terminal spans 29–293; sequence LWVKCSECSQ…GVKELAEANI (265 aa). Residues C33, C36, C52, and C55 each contribute to the Zn(2+) site. Residues 33-55 form a C4-type zinc finger; that stretch reads CSECSQVAYRKDLISNFNVCSNC.

It belongs to the AccD/PCCB family. Acetyl-CoA carboxylase is a heterohexamer composed of biotin carboxyl carrier protein (AccB), biotin carboxylase (AccC) and two subunits each of ACCase subunit alpha (AccA) and ACCase subunit beta (AccD). Requires Zn(2+) as cofactor.

The protein localises to the cytoplasm. The catalysed reaction is N(6)-carboxybiotinyl-L-lysyl-[protein] + acetyl-CoA = N(6)-biotinyl-L-lysyl-[protein] + malonyl-CoA. It functions in the pathway lipid metabolism; malonyl-CoA biosynthesis; malonyl-CoA from acetyl-CoA: step 1/1. Functionally, component of the acetyl coenzyme A carboxylase (ACC) complex. Biotin carboxylase (BC) catalyzes the carboxylation of biotin on its carrier protein (BCCP) and then the CO(2) group is transferred by the transcarboxylase to acetyl-CoA to form malonyl-CoA. The protein is Acetyl-coenzyme A carboxylase carboxyl transferase subunit beta of Prochlorococcus marinus (strain MIT 9312).